Consider the following 256-residue polypeptide: L-erythrulose-1-phosphate isomerase (256 aa).

The Electrophile role is filled by His-96. Glu-169 functions as the Proton acceptor in the catalytic mechanism. Substrate contacts are provided by Gly-175 and Ser-212.

The protein belongs to the triosephosphate isomerase family. As to quaternary structure, homodimer.

It is found in the cytoplasm. It catalyses the reaction L-erythrulose 1-phosphate = D-erythrulose 4-phosphate. Its pathway is carbohydrate metabolism; erythritol degradation. Its function is as follows. Catalyzes the isomerization of D-erythrulose-4P to L-erythrulose-1P. Involved in the degradation pathway of erythritol, that allows B.abortus to grow on this compound as the sole carbon source. This chain is L-erythrulose-1-phosphate isomerase, found in Brucella abortus (strain 2308).